The following is a 541-amino-acid chain: Alpha-zingiberene synthase (541 aa).

Mg(2+)-binding residues include Asp-296, Asp-300, Asp-437, Thr-441, and Glu-445. The short motif at 296-300 (DDIYD) is the DDXXD motif element.

This sequence belongs to the terpene synthase family. The cofactor is Mg(2+). Mn(2+) serves as cofactor.

The enzyme catalyses (2E,6E)-farnesyl diphosphate = alpha-zingiberene + diphosphate. It participates in secondary metabolite biosynthesis; terpenoid biosynthesis. In terms of biological role, sesquiterpene synthase that catalyzes the formation of alpha-zingiberene and other sesquiterpenes from trans,trans-farnesyl diphosphate (FPP). May have an additional monoterpene synthase activity. The polypeptide is Alpha-zingiberene synthase (ZIS) (Ocimum basilicum (Sweet basil)).